The sequence spans 334 residues: Phosphate acyltransferase (334 aa).

Belongs to the PlsX family. As to quaternary structure, homodimer. Probably interacts with PlsY.

The protein localises to the cytoplasm. It carries out the reaction a fatty acyl-[ACP] + phosphate = an acyl phosphate + holo-[ACP]. It functions in the pathway lipid metabolism; phospholipid metabolism. Catalyzes the reversible formation of acyl-phosphate (acyl-PO(4)) from acyl-[acyl-carrier-protein] (acyl-ACP). This enzyme utilizes acyl-ACP as fatty acyl donor, but not acyl-CoA. This chain is Phosphate acyltransferase, found in Streptococcus thermophilus (strain ATCC BAA-491 / LMD-9).